A 426-amino-acid polypeptide reads, in one-letter code: Adenylosuccinate synthetase (426 aa).

GTP is bound by residues 13–19 and 41–43; these read GDEGKGK and GHT. Residue aspartate 14 is the Proton acceptor of the active site. The Mg(2+) site is built by aspartate 14 and glycine 41. Residues 14 to 17, 39 to 42, threonine 129, arginine 143, glutamine 224, threonine 239, and arginine 303 contribute to the IMP site; these read DEGK and NAGH. The active-site Proton donor is the histidine 42. 299–305 contacts substrate; that stretch reads TTTGRPR. Residues arginine 305, 331–333, and 414–416 each bind GTP; these read KLD and GTG.

The protein belongs to the adenylosuccinate synthetase family. In terms of assembly, homodimer. Mg(2+) is required as a cofactor.

It localises to the cytoplasm. It catalyses the reaction IMP + L-aspartate + GTP = N(6)-(1,2-dicarboxyethyl)-AMP + GDP + phosphate + 2 H(+). It participates in purine metabolism; AMP biosynthesis via de novo pathway; AMP from IMP: step 1/2. In terms of biological role, plays an important role in the de novo pathway of purine nucleotide biosynthesis. Catalyzes the first committed step in the biosynthesis of AMP from IMP. This is Adenylosuccinate synthetase from Caldicellulosiruptor bescii (strain ATCC BAA-1888 / DSM 6725 / KCTC 15123 / Z-1320) (Anaerocellum thermophilum).